We begin with the raw amino-acid sequence, 151 residues long: Transcriptional repressor NrdR (151 aa).

Residues 3–34 (CPYCGYGESKVVDSRATDDKMAIRRRRECLKC) fold into a zinc finger. In terms of domain architecture, ATP-cone spans 49 to 139 (LLVIKKNMSR…VYRQFKDINT (91 aa)).

This sequence belongs to the NrdR family. Zn(2+) serves as cofactor.

In terms of biological role, negatively regulates transcription of bacterial ribonucleotide reductase nrd genes and operons by binding to NrdR-boxes. This is Transcriptional repressor NrdR from Clostridium kluyveri (strain NBRC 12016).